A 105-amino-acid polypeptide reads, in one-letter code: Mitochondrial import inner membrane translocase subunit tim14 (105 aa).

Residues 1-3 lie on the Mitochondrial intermembrane side of the membrane; it reads MAS. A helical membrane pass occupies residues 4–23; sequence TFAIGLGVATAAFLGRAGYV. At 24–105 the chain is on the mitochondrial matrix side; it reads ALRRYQGGIN…EAKEFLDKHI (82 aa). Residues 52–105 form the J domain; sequence EAALILELPERTLNKEKVRKKHRQLMLLNHPDRGGSPYLATKINEAKEFLDKHI.

It belongs to the TIM14 family. Heterodimer with PAM18/pamR. Component of the PAM complex, at least composed of mtHsp70, MGE1/mgeA, tim44, PAM16/pamP, PAM17/pamQ and PAM18/pamR.

The protein localises to the mitochondrion inner membrane. Its function is as follows. Essential component of the PAM complex, a complex required for the translocation of transit peptide-containing proteins from the inner membrane into the mitochondrial matrix in an ATP-dependent manner. In the complex, it is required to stimulate activity of mtHSP70 (SSC1/sscA). In Aspergillus fumigatus (strain ATCC MYA-4609 / CBS 101355 / FGSC A1100 / Af293) (Neosartorya fumigata), this protein is Mitochondrial import inner membrane translocase subunit tim14 (pam18).